Here is a 524-residue protein sequence, read N- to C-terminus: Keratin, type II cytoskeletal 71 (524 aa).

The tract at residues 1–130 (MSRQFTCKSG…DPEIQKVRAQ (130 aa)) is head. The tract at residues 131 to 166 (EREQIKALNNKFASFIDKVRFLEQQNQVLQTKWELL) is coil 1A. The IF rod domain maps to 131 to 444 (EREQIKALNN…KLLESEECRM (314 aa)). The interval 167–185 (QQLDLNNCKNNLEPILEGH) is linker 1. The tract at residues 186–277 (ISNMRKQLET…CLFEAEMAQI (92 aa)) is coil 1B. The linker 12 stretch occupies residues 278 to 301 (QSHISDMSVILSMDNNRNLDLDSI). The segment at 302 to 440 (IDEVRAQYEE…ATYRKLLESE (139 aa)) is coil 2. A tail region spans residues 441-524 (ECRMSGEYSS…LSTPSKKGGR (84 aa)). The interval 493–524 (GGENRSRGSASDYKDTLTKGSSLSTPSKKGGR) is disordered. Basic and acidic residues predominate over residues 494 to 509 (GENRSRGSASDYKDTL). Residues 510 to 524 (TKGSSLSTPSKKGGR) show a composition bias toward polar residues.

This sequence belongs to the intermediate filament family. As to quaternary structure, heterodimer of a type I and a type II keratin. Associates with KRT16 and/or KRT17. As to expression, specifically expressed in the inner root sheath (IRS) of the hair follicle. Present in Henle and the Huxley layers of the IRS, while expression in the cuticle is unsure (at protein level).

It is found in the cytoplasm. The protein localises to the cytoskeleton. Plays a central role in hair formation. Essential component of keratin intermediate filaments in the inner root sheath (IRS) of the hair follicle. The protein is Keratin, type II cytoskeletal 71 (Krt71) of Mus musculus (Mouse).